The following is a 313-amino-acid chain: Carbamate kinase 2 (313 aa).

This sequence belongs to the carbamate kinase family.

It localises to the cytoplasm. It catalyses the reaction hydrogencarbonate + NH4(+) + ATP = carbamoyl phosphate + ADP + H2O + H(+). It functions in the pathway metabolic intermediate metabolism; carbamoyl phosphate degradation; CO(2) and NH(3) from carbamoyl phosphate: step 1/1. This is Carbamate kinase 2 (arcC2) from Staphylococcus aureus (strain USA300).